The primary structure comprises 665 residues: Coiled-coil domain-containing protein 138 (665 aa).

Position 48 is a phosphothreonine (threonine 48). Serine 49 bears the Phosphoserine mark. Residues 198–323 (QQKFAEELQK…YEFMTIQRLK (126 aa)) are a coiled coil. Position 469 is a phosphoserine (serine 469).

The protein is Coiled-coil domain-containing protein 138 (CCDC138) of Homo sapiens (Human).